The sequence spans 235 residues: DNA repair protein RecO (235 aa).

It belongs to the RecO family.

Functionally, involved in DNA repair and RecF pathway recombination. The polypeptide is DNA repair protein RecO (Enterobacter sp. (strain 638)).